The sequence spans 311 residues: Acetyl-coenzyme A carboxylase carboxyl transferase subunit alpha (311 aa).

Residues 36–286 enclose the CoA carboxyltransferase C-terminal domain; it reads NLEKETQKVY…SDYVLKAIEE (251 aa).

Belongs to the AccA family. Acetyl-CoA carboxylase is a heterohexamer composed of biotin carboxyl carrier protein (AccB), biotin carboxylase (AccC) and two subunits each of ACCase subunit alpha (AccA) and ACCase subunit beta (AccD).

The protein resides in the cytoplasm. The catalysed reaction is N(6)-carboxybiotinyl-L-lysyl-[protein] + acetyl-CoA = N(6)-biotinyl-L-lysyl-[protein] + malonyl-CoA. Its pathway is lipid metabolism; malonyl-CoA biosynthesis; malonyl-CoA from acetyl-CoA: step 1/1. Component of the acetyl coenzyme A carboxylase (ACC) complex. First, biotin carboxylase catalyzes the carboxylation of biotin on its carrier protein (BCCP) and then the CO(2) group is transferred by the carboxyltransferase to acetyl-CoA to form malonyl-CoA. The sequence is that of Acetyl-coenzyme A carboxylase carboxyl transferase subunit alpha from Campylobacter lari (strain RM2100 / D67 / ATCC BAA-1060).